The sequence spans 260 residues: tRNA pseudouridine synthase C (260 aa).

D54 is an active-site residue.

Belongs to the pseudouridine synthase RluA family.

It catalyses the reaction uridine(65) in tRNA = pseudouridine(65) in tRNA. In terms of biological role, responsible for synthesis of pseudouridine from uracil-65 in transfer RNAs. The sequence is that of tRNA pseudouridine synthase C (truC) from Salmonella typhi.